We begin with the raw amino-acid sequence, 405 residues long: MPLAMNLWSLTLLPGQQYPTYVRRDFQITNAALGEELRSKDGRSVVKVTHNPISQSMLESDDEWSDEDEDEEILSEEDDGEMEVEEVKQKKGKKAEKVEEEDSEEEDEDESDFEDELEETNVLCSLTAGKTEQASLNLTFVRGEVVVFEVTGDNVVHLMGNYIQQDEDSDDESDSDFDGEDDYSELYGSDDDLELDSEEEAAVAKITEIPDEPTPKTKKALPAADKKPVPEAKPAQKRKAEELESPAKEDAALSKAQKKKLAKKAKVEGEKAEEKPAAAAVAEKPATKKEAKAPQKKTLPSGLIIEDIKIGDGPVAKTGKRLGMRYIGKLTNGKQFDANTSGKPFSFVLGKGEVIRGWDEGLAGMAVGGERRLTIPAALAYGNQKIPGIPKNSTLKFDVKLVSIN.

2 disordered regions span residues 49–117 (THNP…EDEL) and 164–297 (QQDE…PQKK). 3 stretches are compositionally biased toward acidic residues: residues 59-84 (ESDD…EMEV), 98-117 (VEEE…EDEL), and 165-201 (QDED…EEEA). 2 stretches are compositionally biased toward basic and acidic residues: residues 238–252 (RKAE…EDAA) and 265–276 (AKVEGEKAEEKP). Residues 319–405 (GKRLGMRYIG…KFDVKLVSIN (87 aa)) enclose the PPIase FKBP-type domain.

It belongs to the FKBP-type PPIase family. FKBP3/4 subfamily. Binds to histones H3 and H4.

It localises to the nucleus. It carries out the reaction [protein]-peptidylproline (omega=180) = [protein]-peptidylproline (omega=0). Inhibited by both FK506 and rapamycin. PPIase that acts as a histone chaperone. Histone proline isomerase that increases the rate of cis-trans isomerization at prolines on the histone H3 N-terminal tail. Proline isomerization influences H3 methylation thereby regulating gene expression. The polypeptide is FK506-binding protein 4 (FPR4) (Cryptococcus neoformans var. neoformans serotype D (strain B-3501A) (Filobasidiella neoformans)).